A 934-amino-acid polypeptide reads, in one-letter code: Sorting nexin-14 (934 aa).

Helical transmembrane passes span 27–47 (YPVI…LNQY) and 48–68 (LHIL…YCSL). One can recognise a PXA domain in the interval 129–303 (PSKVDASISE…MVLIFIDDSP (175 aa)). Positions 335–467 (DLKEIREQQD…CHSDEYFRHL (133 aa)) constitute an RGS domain. The 121-residue stretch at 557-677 (WTISIPYVDF…DFLSPFSMES (121 aa)) folds into the PX domain.

It belongs to the sorting nexin family.

Its subcellular location is the lysosome membrane. The protein localises to the late endosome membrane. It is found in the cell projection. The protein resides in the dendrite. In terms of biological role, plays a role in maintaining normal neuronal excitability and synaptic transmission. May be involved in several stages of intracellular trafficking. Required for autophagosome clearance, possibly by mediating the fusion of lysosomes with autophagosomes. Binds phosphatidylinositol 3,5-bisphosphate (PtdIns(3,5)P2), a key component of late endosomes/lysosomes. Does not bind phosphatidylinositol 3-phosphate (PtdIns(3P)). The chain is Sorting nexin-14 from Danio rerio (Zebrafish).